The primary structure comprises 743 residues: Phosphoribosylformylglycinamidine synthase subunit PurL (743 aa).

His50 is a catalytic residue. ATP contacts are provided by Tyr53 and Lys92. Glu94 contributes to the Mg(2+) binding site. Substrate is bound by residues 95 to 98 (SHNH) and Arg117. Residue His96 is the Proton acceptor of the active site. Position 118 (Asp118) interacts with Mg(2+). Gln241 is a binding site for substrate. Asp269 is a Mg(2+) binding site. 313–315 (ESQ) is a substrate binding site. ATP-binding residues include Asp494 and Gly531. Asn532 provides a ligand contact to Mg(2+). Substrate is bound at residue Ser534.

It belongs to the FGAMS family. In terms of assembly, monomer. Part of the FGAM synthase complex composed of 1 PurL, 1 PurQ and 2 PurS subunits.

It is found in the cytoplasm. The enzyme catalyses N(2)-formyl-N(1)-(5-phospho-beta-D-ribosyl)glycinamide + L-glutamine + ATP + H2O = 2-formamido-N(1)-(5-O-phospho-beta-D-ribosyl)acetamidine + L-glutamate + ADP + phosphate + H(+). The protein operates within purine metabolism; IMP biosynthesis via de novo pathway; 5-amino-1-(5-phospho-D-ribosyl)imidazole from N(2)-formyl-N(1)-(5-phospho-D-ribosyl)glycinamide: step 1/2. In terms of biological role, part of the phosphoribosylformylglycinamidine synthase complex involved in the purines biosynthetic pathway. Catalyzes the ATP-dependent conversion of formylglycinamide ribonucleotide (FGAR) and glutamine to yield formylglycinamidine ribonucleotide (FGAM) and glutamate. The FGAM synthase complex is composed of three subunits. PurQ produces an ammonia molecule by converting glutamine to glutamate. PurL transfers the ammonia molecule to FGAR to form FGAM in an ATP-dependent manner. PurS interacts with PurQ and PurL and is thought to assist in the transfer of the ammonia molecule from PurQ to PurL. In Mesorhizobium japonicum (strain LMG 29417 / CECT 9101 / MAFF 303099) (Mesorhizobium loti (strain MAFF 303099)), this protein is Phosphoribosylformylglycinamidine synthase subunit PurL.